The chain runs to 215 residues: Cytochrome b6 (215 aa).

The helical transmembrane segment at 32-52 (IFYCLGGITLTCFLVQVATGF) threads the bilayer. Cysteine 35 contributes to the heme c binding site. Positions 86 and 100 each coordinate heme b. Transmembrane regions (helical) follow at residues 90 to 110 (ASMMVLMTILHVFRVYLTGGF), 116 to 136 (LTWVTGVVLAVLTASFGVTGY), and 186 to 206 (LHTFVLPLLTAVFMLMHFLMI). Heme b is bound by residues histidine 187 and histidine 202.

It belongs to the cytochrome b family. PetB subfamily. In terms of assembly, the 4 large subunits of the cytochrome b6-f complex are cytochrome b6, subunit IV (17 kDa polypeptide, PetD), cytochrome f and the Rieske protein, while the 4 small subunits are PetG, PetL, PetM and PetN. The complex functions as a dimer. The cofactor is heme b. Heme c is required as a cofactor.

The protein localises to the plastid. It localises to the chloroplast thylakoid membrane. Its function is as follows. Component of the cytochrome b6-f complex, which mediates electron transfer between photosystem II (PSII) and photosystem I (PSI), cyclic electron flow around PSI, and state transitions. This is Cytochrome b6 from Citrus sinensis (Sweet orange).